A 514-amino-acid polypeptide reads, in one-letter code: 23S rRNA (uracil(1939)-C(5))-methyltransferase RlmD (514 aa).

Cys70, Cys76, Cys79, and Cys158 together coordinate [4Fe-4S] cluster. 6 residues coordinate S-adenosyl-L-methionine: Gln272, Phe301, Asn306, Glu322, Asn350, and Asp371. The active-site Nucleophile is the Cys398.

It belongs to the class I-like SAM-binding methyltransferase superfamily. RNA M5U methyltransferase family. RlmD subfamily.

It carries out the reaction uridine(1939) in 23S rRNA + S-adenosyl-L-methionine = 5-methyluridine(1939) in 23S rRNA + S-adenosyl-L-homocysteine + H(+). Its function is as follows. Catalyzes the formation of 5-methyl-uridine at position 1939 (m5U1939) in 23S rRNA. The polypeptide is 23S rRNA (uracil(1939)-C(5))-methyltransferase RlmD (Chromobacterium violaceum (strain ATCC 12472 / DSM 30191 / JCM 1249 / CCUG 213 / NBRC 12614 / NCIMB 9131 / NCTC 9757 / MK)).